We begin with the raw amino-acid sequence, 316 residues long: NAD kinase 1 (316 aa).

Asp-67 serves as the catalytic Proton acceptor. 67–68 (DG) is an NAD(+) binding site. Residues 132–151 (RSAEERADAPTPLQQPDVED) form a disordered region. Residues 160–161 (ND), Arg-190, and Asp-192 contribute to the NAD(+) site.

The protein belongs to the NAD kinase family. A divalent metal cation serves as cofactor.

The protein localises to the cytoplasm. The enzyme catalyses NAD(+) + ATP = ADP + NADP(+) + H(+). Functionally, involved in the regulation of the intracellular balance of NAD and NADP, and is a key enzyme in the biosynthesis of NADP. Catalyzes specifically the phosphorylation on 2'-hydroxyl of the adenosine moiety of NAD to yield NADP. This chain is NAD kinase 1, found in Parasynechococcus marenigrum (strain WH8102).